The following is a 212-amino-acid chain: Small ribosomal subunit protein uS3 (212 aa).

The KH type-2 domain occupies 38-106; the sequence is IRKFVKKTLY…EFAIEVNEIR (69 aa).

Belongs to the universal ribosomal protein uS3 family. As to quaternary structure, part of the 30S ribosomal subunit. Forms a tight complex with proteins S10 and S14.

In terms of biological role, binds the lower part of the 30S subunit head. Binds mRNA in the 70S ribosome, positioning it for translation. In Nitratidesulfovibrio vulgaris (strain ATCC 29579 / DSM 644 / CCUG 34227 / NCIMB 8303 / VKM B-1760 / Hildenborough) (Desulfovibrio vulgaris), this protein is Small ribosomal subunit protein uS3.